A 248-amino-acid chain; its full sequence is 14-3-3 protein sigma (248 aa).

A phosphoserine mark is found at S5, S74, and S248.

Belongs to the 14-3-3 family. As to quaternary structure, homodimer. Interacts with KRT17 and SAMSN1. Found in a complex with XPO7, EIF4A1, ARHGAP1, VPS26A, VPS29 and VPS35. Interacts with GAB2. Interacts with SRPK2. Interacts with COPS6. Interacts with COP1; this interaction leads to proteasomal degradation. Interacts with the 'Thr-369' phosphorylated form of DAPK2. Interacts with PI4KB. Interacts with SLITRK1. Interacts with LRRK2; this interaction is dependent on LRRK2 phosphorylation. Interacts with PKP3 (via N-terminus); the interaction maintains the cytoplasmic pool of PKP3, facilitates PKP3 exchange at desmosomes and restricts PKP3 localization to existing desmosome cell junctions. Interacts with LCP2. Ubiquitinated. Ubiquitination by RFFL induces proteasomal degradation and indirectly regulates p53/TP53 activation. In terms of tissue distribution, present mainly in tissues enriched in stratified squamous keratinizing epithelium.

The protein resides in the cytoplasm. It localises to the nucleus. Its subcellular location is the secreted. Adapter protein implicated in the regulation of a large spectrum of both general and specialized signaling pathways. Binds to a large number of partners, usually by recognition of a phosphoserine or phosphothreonine motif. Binding generally results in the modulation of the activity of the binding partner. Promotes cytosolic retention of GBP1 GTPase by binding to phosphorylated GBP1, thereby inhibiting the innate immune response. Also acts as a TP53/p53-regulated inhibitor of G2/M progression. When bound to KRT17, regulates protein synthesis and epithelial cell growth by stimulating Akt/mTOR pathway. Acts to maintain desmosome cell junction adhesion in epithelial cells via interacting with and sequestering PKP3 to the cytoplasm, thereby restricting its translocation to existing desmosome structures and therefore maintaining desmosome protein homeostasis. Also acts to facilitate PKP3 exchange at desmosome plaques, thereby maintaining keratinocyte intercellular adhesion. May also regulate MDM2 autoubiquitination and degradation and thereby activate p53/TP53. The polypeptide is 14-3-3 protein sigma (SFN) (Homo sapiens (Human)).